The primary structure comprises 161 residues: MEFTTAGLCDQFHGTHPLQIVEPLFRPFGAVSRFHGRITTLKVFEDSVLIRETLAQEVDGRVLVIDGGASHRCALLGGNLARLAADNGWQGIIVYGCVRDSVELGTVPIGIRALHTHPLDSHKRGGGDRDCLITFASVNFRTDHYLYADEDGIVVSEEKLI.

Substrate-binding positions include 77 to 80 (GGNL) and R99. Position 100 (D100) interacts with a divalent metal cation.

It belongs to the class II aldolase/RraA-like family. In terms of assembly, homotrimer. It depends on a divalent metal cation as a cofactor.

It catalyses the reaction 4-hydroxy-4-methyl-2-oxoglutarate = 2 pyruvate. It carries out the reaction oxaloacetate + H(+) = pyruvate + CO2. In terms of biological role, catalyzes the aldol cleavage of 4-hydroxy-4-methyl-2-oxoglutarate (HMG) into 2 molecules of pyruvate. Also contains a secondary oxaloacetate (OAA) decarboxylase activity due to the common pyruvate enolate transition state formed following C-C bond cleavage in the retro-aldol and decarboxylation reactions. This is Putative 4-hydroxy-4-methyl-2-oxoglutarate aldolase from Methylococcus capsulatus (strain ATCC 33009 / NCIMB 11132 / Bath).